Reading from the N-terminus, the 166-residue chain is Photosystem I assembly protein Ycf3 (166 aa).

TPR repeat units follow at residues 35 to 68, 72 to 105, and 120 to 153; these read AFVYYRDGMSAQAEGEYAEALQNYAQAMRLEVDP, SFIFYNIGLIHTSNGEHTKALEYYYQALDRNPSL, and GEQALAAGNIPDSETLFEKAAEYWKEAIRLAPLN.

The protein belongs to the Ycf3 family.

Its subcellular location is the plastid. It is found in the chloroplast thylakoid membrane. In terms of biological role, essential for the assembly of the photosystem I (PSI) complex. May act as a chaperone-like factor to guide the assembly of the PSI subunits. In Ostreococcus tauri, this protein is Photosystem I assembly protein Ycf3.